A 71-amino-acid polypeptide reads, in one-letter code: Large ribosomal subunit protein bL31 (71 aa).

Cys-16, Cys-18, Cys-38, and Cys-41 together coordinate Zn(2+).

It belongs to the bacterial ribosomal protein bL31 family. Type A subfamily. In terms of assembly, part of the 50S ribosomal subunit. Zn(2+) is required as a cofactor.

Its function is as follows. Binds the 23S rRNA. The protein is Large ribosomal subunit protein bL31 of Francisella tularensis subsp. mediasiatica (strain FSC147).